A 789-amino-acid polypeptide reads, in one-letter code: MNIMNTEQSQNTIVSRIKAFEGQTNTEIPGLPKKPEIIPRTIPPKPAVSSGKPLVAPKPAANRASGEWDTWAENRLKVTSREGLTPYSSPQEAGITPVTKPELPKKPTPGLTRSVNHETSGGRPMAESPDTGKKIPTPAPRPLLPKKSASTDAPPYPSIPPKLVSAPPRLSVASQAKAFRSLGEGLPSNPPVPAPQSKALGDIDLISFDDDVLPTSGSPAEEPTGSETVLDPFQLPTKTEATKERAVQPAPTRKPTVIRIPAKPGKCLHEEPQSPPPLPAEKPVGNTHSAVSGRPSHSDRTRNPELEQASESGGLVQGPPRLPPRPVHGKVIPVWRPPPKGAPERPPPPKLPASKSSNKNLPFNRSSSDMDLQKKQSHFVSGLSKAKSQIFKNQDPVLPPRPKPGHPLYRKYMLSVPHGIANEDIVSRNPTELSCKRGDVLVILKQAENNYLECQRGEGTGRVHPSQMKIVTPLDERPRGRPNDSGHSQKPVDSGAPHAVALHDFPAEQADDLSLTSGEIVYLLEKIDAEWYRGKCRNQTGVFPANYVKVIVDIPEGRSGKRESFSSHCAKGPRCVARFEYIGDQKDELSFSEGEVIILTEYVNEEWGRGEIRDRSGIFPLNFVELVGDHPTSGANILSTKVPPKTKNEDPGSNSQDSSPPGEWCKALHSFTAETSEDLPFKRGDRILILERLDSDWYRGRLHDREGIFPAVFVQPCPAEAKGVASAIPKGRKVKALYDFLGENEDELSFKAGDVITELEPIDDAWMRGELMGRAGMFPKNYVQFLQVS.

Disordered stretches follow at residues 24–170 (TNTE…PPRL), 209–404 (DDDV…RPKP), and 472–497 (TPLD…SGAP). Ser65 carries the phosphoserine modification. Positions 296 to 305 (SHSDRTRNPE) are enriched in basic and acidic residues. Positions 335-351 (WRPPPKGAPERPPPPKL) are enriched in pro residues. A compositionally biased stretch (low complexity) spans 352-361 (PASKSSNKNL). Ser368 is subject to Phosphoserine. SH3 domains follow at residues 414-476 (LSVP…PLDE), 494-553 (SGAP…VIVD), 570-629 (AKGP…LVGD), 660-719 (PPGE…PCPA), and 729-788 (PKGR…FLQV). A compositionally biased stretch (basic and acidic residues) spans 474–484 (LDERPRGRPND). The segment at 635–663 (ANILSTKVPPKTKNEDPGSNSQDSSPPGE) is disordered.

Interacts with ADAM12. Isoform 2 (but not isoform 1) interacts with ADAM9, ADAM10, ADAM15 and ADAM17. Interacts with SH3GL1 SH3 domain. Interacts via SH3 3 and SH3 4 or SH3 4 and SH3 5 domains with SOS2. Probably forms a trimeric complex with SH3GL1 and SOS2. Interacts with SH3YL1. Expressed in hair follicles.

It localises to the cytoplasm. May play a role in regulating A disintegrin and metalloproteases (ADAMs) in the signaling of EGFR-ligand shedding. May be involved in suppression of Ras-induced cellular transformation and Ras-mediated activation of ELK1. Plays a role in the regulation of cell morphology and cytoskeletal organization. This chain is SH3 domain-containing protein 19 (Sh3d19), found in Mus musculus (Mouse).